The sequence spans 456 residues: GTPase Der (456 aa).

EngA-type G domains follow at residues 2-167 (LKVA…DQFG) and 176-351 (ATFC…AQLK). Residues 8-15 (GKPNVGKS), 55-59 (DTGGL), 118-121 (NKIE), 182-189 (GKPNVGKS), 229-233 (DTAGI), and 294-297 (NKWD) each bind GTP. A KH-like domain is found at 352–436 (IKISTSLLND…PITLYFKSKN (85 aa)).

It belongs to the TRAFAC class TrmE-Era-EngA-EngB-Septin-like GTPase superfamily. EngA (Der) GTPase family. In terms of assembly, associates with the 50S ribosomal subunit.

GTPase that plays an essential role in the late steps of ribosome biogenesis. The polypeptide is GTPase Der (Mycoplasmoides gallisepticum (strain R(low / passage 15 / clone 2)) (Mycoplasma gallisepticum)).